The primary structure comprises 906 residues: MLSLVQKIIGSRNERFIKKVSRIVQKINSLEPEFEKLSDEQLKAKTFEYRERLANGEILDNLLPEAFATVREAGKRTKNMRHYDVQLIGGIVLHQGKVAEMKTGEGKTLVATLPAYLNALTGDGVHVITVNDYLAKRDAELMSDIYEFLGMSVGVIVADLNPQQRKEAYACDITYGTNNEFGFDYLRDNMAYEKEQQVQRSRNYVIIDEVDSILIDEARTPLIISGASDDSSEMYNLFNRLVPYLEKQEKEEVENEQEQRDFYVDEKSKNAYLTEKGYAKIENMLKKEGILEEDDNLYSPHNITKMHYLNACLRAHSLYQLNIDYIVRDQEIVIIDESTGRAMPGRRWSDGLHQAIEAKEGVKINAENQTMASITFQNFFKLYNKIAGMTGTADTEAFELHSIYGLEVIIIPTNKPMIRKDHHDEIYGSVREKFDAIVEDIKERISKGQPVLVGTASIEASEVLSTLLKKKKIRHNVLNAKQHEKEASIIAMAGYPDNVTIATNMAGRGTDIILGGNLEVEIAQLEDPTPEDIAQIKAEWLKRNEAVKKAGGLCIIGSERHDSRRIDNQLRGRAARQGDPGESKFYLSMDDNLLRIFASQSMAERVKKGLKGGESLAFGFMSKVISKAQGKVESYHFDIRKNLLEYDNVVNTQRKVIYEQRQSFLEAEDVSDILADIRIDVAEQLFHDYVSAGSMHELWDLEGLEKALKSDFMIELDLQKLYEEDDSLGEEDLKRLVREAIEIEFVEKTKNLDSGAVRQFEKFSLLQSLDTHWREHLSSIDHLRNSINLRGYAQKDPKNEYKKEAFELFSTMLDNFKYEVISSLAKIRIATEEETQRAQQEWQESMSDIKAEHESVIDNNQRHDEDEQEEAPKVQQVRREGPKVKRNDPCPCGSGKKYKQCHGKVE.

ATP is bound by residues Gln86, 104–108, and Asp511; that span reads GEGKT. Composition is skewed to basic and acidic residues over residues 853–865 and 877–888; these read HESVIDNNQRHDE and VRREGPKVKRND. The segment at 853-906 is disordered; it reads HESVIDNNQRHDEDEQEEAPKVQQVRREGPKVKRNDPCPCGSGKKYKQCHGKVE. Residues Cys890, Cys892, Cys901, and His902 each contribute to the Zn(2+) site. The span at 896–906 shows a compositional bias: basic residues; sequence KKYKQCHGKVE.

This sequence belongs to the SecA family. In terms of assembly, monomer and homodimer. Part of the essential Sec protein translocation apparatus which comprises SecA, SecYEG and auxiliary proteins SecDF-YajC and YidC. Requires Zn(2+) as cofactor.

The protein localises to the cell inner membrane. It is found in the cytoplasm. It catalyses the reaction ATP + H2O + cellular proteinSide 1 = ADP + phosphate + cellular proteinSide 2.. In terms of biological role, part of the Sec protein translocase complex. Interacts with the SecYEG preprotein conducting channel. Has a central role in coupling the hydrolysis of ATP to the transfer of proteins into and across the cell membrane, serving both as a receptor for the preprotein-SecB complex and as an ATP-driven molecular motor driving the stepwise translocation of polypeptide chains across the membrane. The polypeptide is Protein translocase subunit SecA (Francisella tularensis subsp. holarctica (strain FTNF002-00 / FTA)).